Consider the following 233-residue polypeptide: Uridylate kinase (233 aa).

9 to 10 lines the ATP pocket; sequence GS. Gly43 serves as a coordination point for UMP. Positions 44 and 48 each coordinate ATP. Residues Asp65 and 113–119 contribute to the UMP site; that span reads VTPGQTT. The ATP site is built by Thr139, Tyr145, and Asp148.

It belongs to the UMP kinase family. In terms of assembly, homohexamer.

It localises to the cytoplasm. The enzyme catalyses UMP + ATP = UDP + ADP. It participates in pyrimidine metabolism; CTP biosynthesis via de novo pathway; UDP from UMP (UMPK route): step 1/1. Its activity is regulated as follows. Inhibited by UTP. In terms of biological role, catalyzes the reversible phosphorylation of UMP to UDP. This Methanosarcina acetivorans (strain ATCC 35395 / DSM 2834 / JCM 12185 / C2A) protein is Uridylate kinase.